The sequence spans 582 residues: Leucine-rich repeat transmembrane neuronal protein 3 (582 aa).

An N-terminal signal peptide occupies residues 1–30 (MGFNVIRLLRGSAVAVVLAPTVLLTMLSSA). Residues 31 to 61 (ERGCPKGCRCEGKMVYCESQKLQEIPSSISA) form the LRRNT domain. Residues 31–420 (ERGCPKGCRC…VDTEHISFHK (390 aa)) are Extracellular-facing. LRR repeat units lie at residues 63 to 83 (CLGL…QFKG), 86 to 107 (QLTW…AFNG), 110 to 131 (RLKE…TFRP), 134 to 155 (NLRN…QFRG), 158 to 179 (KLLS…IFQD), 182 to 203 (NLEL…VFAG), 206 to 226 (RLKE…ALFP), 230 to 251 (SLQN…MSWT), 254 to 275 (SLQR…SVFQ), and 279 to 300 (NLQR…ILDS). The N-linked (GlcNAc...) asparagine glycan is linked to Asn-126. In terms of domain architecture, LRRCT spans 312–363 (NIWECSRNICSLVNWLRSFKGLRENTIICASPKELQGVNVIDAVKNYSICGK). N-linked (GlcNAc...) asparagine glycosylation occurs at Asn-357. Residues 378-410 (KPTFKPKLPRPKHESKPPLPPTVGATEPSPETD) form a disordered region. A helical membrane pass occupies residues 421–441 (IIAGSVALFLSVLVILLVMYV). Topologically, residues 442-582 (SWKRYPASMK…RISDHKPQLA (141 aa)) are cytoplasmic.

Belongs to the LRRTM family. As to expression, expressed in neuronal tissues.

Its subcellular location is the cell membrane. It is found in the postsynaptic cell membrane. In terms of biological role, may play a role in the development and maintenance of the vertebrate nervous system. Exhibits a limited synaptogenic activity in vitro, restricted to excitatory presynaptic differentiation. The polypeptide is Leucine-rich repeat transmembrane neuronal protein 3 (Lrrtm3) (Mus musculus (Mouse)).